We begin with the raw amino-acid sequence, 606 residues long: WD repeat-containing protein 1 (606 aa).

13 WD repeats span residues 4-45 (EIKK…LRNI), 48-87 (PAIA…IWDT), 93-135 (LLKY…LWDT), 138-176 (SVGE…FFEG), 180-218 (KFKF…IYDG), 224-263 (VCAL…IWDV), 270-306 (STFP…YLDK), 311-351 (KPLR…YWDS), 358-408 (SFSG…KLDV), 432-474 (LKDQ…VYSI), 480-518 (KDEG…VFSV), 523-561 (SENN…VWTL), and 566-604 (TKVK…EWTI). N6-acetyllysine occurs at positions 28, 81, 95, and 115. A Phosphotyrosine modification is found at Y238. Residue K480 is modified to N6-acetyllysine.

Belongs to the WD repeat AIP1 family.

Its subcellular location is the cytoplasm. The protein resides in the cytoskeleton. It localises to the cell projection. The protein localises to the podosome. Its function is as follows. Induces disassembly of actin filaments in conjunction with ADF/cofilin family proteins. Enhances cofilin-mediated actin severing. Involved in cytokinesis. Involved in chemotactic cell migration by restricting lamellipodial membrane protrusions. Involved in myocardium sarcomere organization. Required for cardiomyocyte growth at the postnatal and maintenance at the adult stage. Involved in neutrophil actin dynamics and migration. Involved in megakaryocyte maturation and platelet shedding. Required for the establishment of planar cell polarity (PCP) during follicular epithelium development and for cell shape changes during PCP; the function seems to implicate cooperation with CFL1 and/or DSTN/ADF. Involved in the generation/maintenance of cortical tension. Involved in assembly and maintenance of epithelial apical cell junctions and plays a role in the organization of the perijunctional actomyosin belt. The protein is WD repeat-containing protein 1 (Wdr1) of Mus musculus (Mouse).